The following is a 287-amino-acid chain: AA9 family lytic polysaccharide monooxygenase C (287 aa).

A signal peptide spans Met-1 to Ala-16. His-17 contributes to the Cu(2+) binding site. Asn-22 is a glycosylation site (N-linked (GlcNAc...) asparagine). Disulfide bonds link Cys-77–Cys-230 and Cys-200–Cys-284. Residue His-114 coordinates Cu(2+). Positions 216 and 225 each coordinate O2. Tyr-227 contacts Cu(2+).

The protein belongs to the polysaccharide monooxygenase AA9 family. The cofactor is Cu(2+).

Its subcellular location is the secreted. The catalysed reaction is [(1-&gt;4)-beta-D-glucosyl]n+m + reduced acceptor + O2 = 4-dehydro-beta-D-glucosyl-[(1-&gt;4)-beta-D-glucosyl]n-1 + [(1-&gt;4)-beta-D-glucosyl]m + acceptor + H2O.. Lytic polysaccharide monooxygenase (LPMO) that depolymerizes crystalline and amorphous polysaccharides via the oxidation of scissile alpha- or beta-(1-4)-glycosidic bonds, yielding C1 or C4 oxidation products. Catalysis by LPMOs requires the reduction of the active-site copper from Cu(II) to Cu(I) by a reducing agent and H(2)O(2) or O(2) as a cosubstrate. This Podospora anserina (strain S / ATCC MYA-4624 / DSM 980 / FGSC 10383) (Pleurage anserina) protein is AA9 family lytic polysaccharide monooxygenase C.